The sequence spans 1346 residues: DNA-directed RNA polymerase subunit beta (1346 aa).

It belongs to the RNA polymerase beta chain family. As to quaternary structure, the RNAP catalytic core consists of 2 alpha, 1 beta, 1 beta' and 1 omega subunit. When a sigma factor is associated with the core the holoenzyme is formed, which can initiate transcription.

It catalyses the reaction RNA(n) + a ribonucleoside 5'-triphosphate = RNA(n+1) + diphosphate. Its function is as follows. DNA-dependent RNA polymerase catalyzes the transcription of DNA into RNA using the four ribonucleoside triphosphates as substrates. This is DNA-directed RNA polymerase subunit beta from Psychromonas ingrahamii (strain DSM 17664 / CCUG 51855 / 37).